A 349-amino-acid polypeptide reads, in one-letter code: tRNA pseudouridine synthase D (349 aa).

F27 provides a ligand contact to substrate. D80 acts as the Nucleophile in catalysis. Position 129 (N129) interacts with substrate. One can recognise a TRUD domain in the interval 155 to 303; that stretch reads GVPNYFGPQR…VEAARRAMLL (149 aa). F329 is a substrate binding site.

The protein belongs to the pseudouridine synthase TruD family.

It carries out the reaction uridine(13) in tRNA = pseudouridine(13) in tRNA. Responsible for synthesis of pseudouridine from uracil-13 in transfer RNAs. This chain is tRNA pseudouridine synthase D, found in Cronobacter sakazakii (strain ATCC BAA-894) (Enterobacter sakazakii).